Reading from the N-terminus, the 842-residue chain is Probable receptor-like protein kinase At5g61350 (842 aa).

Positions 1-27 are cleaved as a signal peptide; that stretch reads MGGDFRHFSSHVSLLLLFLLIVKSSSS. Residues 28–425 lie on the Extracellular side of the membrane; sequence FTPADNYLID…IGGMSSKKLA (398 aa). 6 N-linked (GlcNAc...) asparagine glycosylation sites follow: Asn-81, Asn-125, Asn-252, Asn-294, Asn-359, and Asn-365. Residues 426–446 traverse the membrane as a helical segment; it reads IAGIGFVMALTAFLGVVVLLV. Residues 447–842 lie on the Cytoplasmic side of the membrane; it reads RWQRRPKDWQ…EMQSPSHSIP (396 aa). Residues 525–803 form the Protein kinase domain; it reads FDENAVCGVG…GDVLWNLEYA (279 aa). Residues 531-539 and Lys-553 each bind ATP; that span reads CGVGGFGKV. Catalysis depends on Asp-655, which acts as the Proton acceptor.

This sequence belongs to the protein kinase superfamily. Ser/Thr protein kinase family.

The protein resides in the membrane. The protein is Probable receptor-like protein kinase At5g61350 of Arabidopsis thaliana (Mouse-ear cress).